The primary structure comprises 279 residues: Energy-coupling factor transporter ATP-binding protein EcfA1 (279 aa).

Residues 6-240 (VRLEHVFYKY…ADAMREIGLG (235 aa)) enclose the ABC transporter domain. 40 to 47 (GHNGSGKS) contacts ATP.

The protein belongs to the ABC transporter superfamily. Energy-coupling factor EcfA family. As to quaternary structure, forms a stable energy-coupling factor (ECF) transporter complex composed of 2 membrane-embedded substrate-binding proteins (S component), 2 ATP-binding proteins (A component) and 2 transmembrane proteins (T component).

The protein localises to the cell membrane. Functionally, ATP-binding (A) component of a common energy-coupling factor (ECF) ABC-transporter complex. Unlike classic ABC transporters this ECF transporter provides the energy necessary to transport a number of different substrates. In Listeria monocytogenes serotype 4b (strain F2365), this protein is Energy-coupling factor transporter ATP-binding protein EcfA1.